The primary structure comprises 269 residues: Type II iodothyronine deiodinase (269 aa).

Residues 1–7 (MGLLSVD) lie on the Lumenal side of the membrane. A helical; Signal-anchor for type III membrane protein membrane pass occupies residues 8-28 (LLITLQILPWFFSNCLFLALY). The Cytoplasmic portion of the chain corresponds to 29-269 (DSVVLLKHVI…RUVPTCELIM (241 aa)). The active site involves U128. 2 non-standard amino acids (selenocysteine) are found at residues U128 and U261.

The protein belongs to the iodothyronine deiodinase family. As to quaternary structure, predominantly monomer. Can form homodimers but homodimerization is not essential for enzyme activity.

The protein localises to the endoplasmic reticulum membrane. It carries out the reaction 3,3',5-triiodo-L-thyronine + iodide + A + H(+) = L-thyroxine + AH2. The catalysed reaction is 3,3'-diiodo-L-thyronine + iodide + A + H(+) = 3,3',5'-triiodo-L-thyronine + AH2. The enzyme catalyses 3'-iodo-L-thyronine + iodide + A + H(+) = 3',5'-diiodo-L-thyronine + AH2. It catalyses the reaction 3,3'-diiodothyronamine + iodide + A + H(+) = 3,3',5'-triiodothyronamine + AH2. It carries out the reaction 3'-iodothyronamine + iodide + A + H(+) = 3',5'-diiodothyronamine + AH2. In terms of biological role, plays a crucial role in the metabolism of thyroid hormones (TH) and has specific roles in TH activation and inactivation by deiodination. Catalyzes the deiodination of L-thyroxine (T4) to 3,5,3'-triiodothyronine (T3), 3,3',5'-triiodothyronine (rT3) to 3,3'-diiodothyronine (3,3'-T2) and 3',5'-diiodothyronine (3',5'-T2) to 3'-monoiodothyronine (3'-T1) via outer-ring deiodination (ORD). Catalyzes the phenolic ring deiodinations of 3,3',5'-triiodothyronamine and 3',5'- diiodothyronamine. In Neoceratodus forsteri (Australian lungfish), this protein is Type II iodothyronine deiodinase (dio2).